A 117-amino-acid chain; its full sequence is Appetite-regulating hormone (117 aa).

The signal sequence occupies residues 1-23; it reads MPSPGTVCSLLLFSMLWADLAMA. Serine 26 is lipidated: O-decanoyl serine; alternate. A lipid anchor (O-hexanoyl serine; alternate) is attached at serine 26. Residue serine 26 is the site of O-octanoyl serine; alternate attachment. Positions 29–52 are disordered; the sequence is SPEHQKVQQRKESKKPPAKLQPRA. A compositionally biased stretch (basic and acidic residues) spans 31–43; sequence EHQKVQQRKESKK. A propeptide spans 52-75 (removed in mature form); sequence ALEGLIHPEDTSQVEGAEDELEIR. Residue leucine 98 is modified to Leucine amide. Positions 99–117 are cleaved as a propeptide — removed in mature form; that stretch reads GKFLQDVLWEEADEVLADE.

Belongs to the motilin family. O-octanoylated by GOAT/MBOAT4. O-octanoylation or O-decanoylation is essential for ghrelin activity. The O-decanoylated forms Ghrelin-27-C10 and Ghrelin-28-C10 differ in the length of the carbon backbone of the carboxylic acid bound to Ser-26. A small fraction of ghrelin, ghrelin-27-C10:1, ghrelin-27-C10:2, ghrelin-28-C8:1, ghrelin-28-C10:1, and ghrelin-28-C10:2, may be modified with singly or doubly unsaturated carboxylic acids. In terms of processing, amidation of Leu-98 is essential for obestatin activity.

The protein resides in the secreted. Ghrelin is the ligand for growth hormone secretagogue receptor type 1 (GHSR). Induces the release of growth hormone from the pituitary. Has an appetite-stimulating effect, induces adiposity and stimulates gastric acid secretion. Involved in growth regulation. Functionally, obestatin may be the ligand for GPR39. May have an appetite-reducing effect resulting in decreased food intake. May reduce gastric emptying activity and jejunal motility. This is Appetite-regulating hormone (GHRL) from Felis catus (Cat).